A 380-amino-acid chain; its full sequence is Ubiquitin-like protein 7 (380 aa).

Residues 18-98 form the Ubiquitin-like domain; the sequence is APKSILQLPE…VLRKSWPEPD (81 aa). The tract at residues 200–313 is disordered; sequence TPMPGADSSS…SSGVQSGTPI (114 aa). Residues 206-221 show a composition bias toward low complexity; the sequence is DSSSRSMPSSSYRDMP. Position 230 is a phosphoserine (Ser230). Composition is skewed to low complexity over residues 239-253 and 270-293; these read STRSTPSSSTPSSRP and SELATALALASTPESSSHTPTPGT. Residues 294–313 show a composition bias toward polar residues; that stretch reads QGHSSGTSPMSSGVQSGTPI. One can recognise a UBA domain in the interval 333-377; that stretch reads SLQIQWQPQLQQLRDMGIQDDELSLRALQATGGDIQAALELIFAG.

As to quaternary structure, binds ubiquitin. Interacts with MAVS; this interaction enhances TRIM21-dependent 'Lys-27'-linked polyubiquitination of MAVS. Post-translationally, deubiquitinated by OTUD4 which stabilizes UBL7 expression.

Functionally, interferon-stimulated protein that positively regulates RNA virus-triggered innate immune signaling. Mechanistically, promotes 'Lys-27'-linked polyubiquitination of MAVS through TRIM21 leading to enhanced the IFN signaling pathway. This is Ubiquitin-like protein 7 (Ubl7) from Mus musculus (Mouse).